The chain runs to 346 residues: Histidinol-phosphate aminotransferase (346 aa).

Lys-209 is subject to N6-(pyridoxal phosphate)lysine.

Belongs to the class-II pyridoxal-phosphate-dependent aminotransferase family. Histidinol-phosphate aminotransferase subfamily. As to quaternary structure, homodimer. Pyridoxal 5'-phosphate is required as a cofactor.

The catalysed reaction is L-histidinol phosphate + 2-oxoglutarate = 3-(imidazol-4-yl)-2-oxopropyl phosphate + L-glutamate. The protein operates within amino-acid biosynthesis; L-histidine biosynthesis; L-histidine from 5-phospho-alpha-D-ribose 1-diphosphate: step 7/9. The protein is Histidinol-phosphate aminotransferase of Flavobacterium psychrophilum (strain ATCC 49511 / DSM 21280 / CIP 103535 / JIP02/86).